A 293-amino-acid polypeptide reads, in one-letter code: Cytochrome c biogenesis protein CcsA (293 aa).

Helical transmembrane passes span 12–32 (INIL…AKLT), 39–59 (VFSL…GMLL), 78–98 (LFLS…LSII), 99–119 (GAIG…ILPP), 142–162 (VMIF…IYVI), 216–236 (FISL…VWAN), 250–267 (TWAL…HIRI), and 273–293 (KIYA…VTWE).

The protein belongs to the CcmF/CycK/Ccl1/NrfE/CcsA family. May interact with Ccs1.

Its subcellular location is the plastid. The protein localises to the chloroplast thylakoid membrane. Its function is as follows. Required during biogenesis of c-type cytochromes (cytochrome c6 and cytochrome f) at the step of heme attachment. This chain is Cytochrome c biogenesis protein CcsA, found in Cyanidium caldarium (Red alga).